The following is a 101-amino-acid chain: DNA-binding protein Fis (101 aa).

The segment at residues 77-96 (QTRAANMLGINRGTLRKKLK) is a DNA-binding region (H-T-H motif).

The protein belongs to the transcriptional regulatory Fis family. Homodimer.

Activates ribosomal RNA transcription. Plays a direct role in upstream activation of rRNA promoters. This chain is DNA-binding protein Fis, found in Shewanella amazonensis (strain ATCC BAA-1098 / SB2B).